The sequence spans 944 residues: MNWNKGGPGTKRGFGFGGFAITPGKKEEPKLSQQSHSAFGTAGSSAAFAKSGPPQLPSFYKIGSKRANFDEENAYFEDEEEDNSNVDLPYIPAENSPTRQQFNSKSADSDSDDDPLEAFMAEVEDQAARDMKRLEDKDKEKKNAKGIRDDIEEEDDQEAYFRYMAENPTAGVVQEEEEDNLEYDSDGNPIAPSKKIIDPLPPIDHSEIEYPPFEKNFYDEHEEITSLTPQQVVELRHKLNLRVSGAAPPRPGSSFARFGFDEQLMHQIRKSEYTQPTPIQCQGVPVAMSGRDMIGIAKTGSGKTAAFIWPMLIHIMDQKELEPGDGPIAVIVCPTRELCQQIHSECKRFGKAYNLRSVAVYGGGSMWEQAKALQEGAEIVVCTPGRLIDHVKKKATNLQRVTYLVFDEADRMFDMGFEYQVRSIASHVRPDRQTLLFSATFRKKIEKLARDILIDPIRVVQGDIGEANEDVTQIVEIFPSGPSKWNWLTRRLVEFTSSGSVLLFVTKKANAEELANNLKQEDHNLGLLHGDMDQSERNKVISEFKKKGIPILVATDVAARGLDIPSIKTVINYDVARDIDTHTHRIGRTGRAGEKGVAYTLLTPKDSNFAGDLVRNLEGANQHVSKELLDLAMQNPWFRKSRFKGGKGKKPNIGGGGLGYRERPGLGSESSDRGNNNSVMSNYEAYKPSSGAMGDRLTAMKAAFQSQYKSHFVAASLNNQKTGSSAAGASGWTSAGSLNSVPTSSAQQNAANPDSPIAATAAAKGVPGFTSTGTLSSVPTFPSVGVQGYSNNSSANASAGNREGVGSAGSAPRGGSSGGGGGGIVRERYSDNRNSRHNEVPRRGEGGGRYNDVQHHGEGGGRYSDAYRHGEGRHGDSHRHAEGRHFTDTGGGNRNNVDGRNISEGRSNESRNGENRKDANSRDNKTDGFAVPEPPKRKKSRWDS.

Over residues 1 to 18 (MNWNKGGPGTKRGFGFGG) the composition is skewed to gly residues. Disordered regions lie at residues 1 to 119 (MNWN…LEAF), 131 to 155 (MKRLEDKDKEKKNAKGIRDDIEEED), and 182 to 203 (EYDSDGNPIAPSKKIIDPLPPI). The span at 35–52 (SHSAFGTAGSSAAFAKSG) shows a compositional bias: low complexity. Over residues 70-84 (DEENAYFEDEEEDNS) the composition is skewed to acidic residues. Residues 120–157 (MAEVEDQAARDMKRLEDKDKEKKNAKGIRDDIEEEDDQ) adopt a coiled-coil conformation. Over residues 131 to 149 (MKRLEDKDKEKKNAKGIRD) the composition is skewed to basic and acidic residues. Residues 253 to 281 (SSFARFGFDEQLMHQIRKSEYTQPTPIQC) carry the Q motif motif. In terms of domain architecture, Helicase ATP-binding spans 284 to 459 (VPVAMSGRDM…RDILIDPIRV (176 aa)). 297 to 304 (AKTGSGKT) is a binding site for ATP. The DEAD box signature appears at 407-410 (DEAD). A Helicase C-terminal domain is found at 487–632 (WLTRRLVEFT…HVSKELLDLA (146 aa)). Disordered regions lie at residues 642 to 682 (RFKG…VMSN), 723 to 753 (GSSAAGASGWTSAGSLNSVPTSSAQQNAANP), and 794 to 944 (SANA…RWDS). Positions 723 to 737 (GSSAAGASGWTSAGS) are enriched in low complexity. Residues 738 to 752 (LNSVPTSSAQQNAAN) are compositionally biased toward polar residues. Positions 794-814 (SANASAGNREGVGSAGSAPRG) are enriched in low complexity. The span at 815 to 824 (GSSGGGGGGI) shows a compositional bias: gly residues. 2 stretches are compositionally biased toward basic and acidic residues: residues 825 to 887 (VRER…RHFT) and 901 to 926 (NISEGRSNESRNGENRKDANSRDNKT).

Belongs to the DEAD box helicase family. DDX42 subfamily. Transient component of the SF3B subcomplex of the 17S U2 SnRNP complex.

The protein localises to the cytoplasm. Its subcellular location is the nucleus. It catalyses the reaction ATP + H2O = ADP + phosphate + H(+). Functionally, ATP-dependent RNA helicase that binds to partially double-stranded RNAs (dsRNAs) in order to unwind RNA secondary structures. Unwinding is promoted in the presence of single-strand binding proteins. Also mediates RNA duplex formation thereby displacing the single-strand RNA binding protein. ATP and ADP modulate its activity: ATP binding and hydrolysis by DDX42 triggers RNA strand separation, whereas the ADP-bound form of the protein triggers annealing of complementary RNA strands. Required for assembly of the 17S U2 SnRNP complex of the spliceosome, a large ribonucleoprotein complex that removes introns from transcribed pre-mRNAs: DDX42 associates transiently with the SF3B subcomplex of the 17S U2 SnRNP complex and is released after fulfilling its role in the assembly of 17S U2 SnRNP. In Gallus gallus (Chicken), this protein is ATP-dependent RNA helicase DDX42 (DDX42).